A 48-amino-acid chain; its full sequence is Light-harvesting polypeptide B-885 beta-2 chain (48 aa).

The Cytoplasmic portion of the chain corresponds to alanine 1 to threonine 20. Residues leucine 21 to tryptophan 43 form a helical membrane-spanning segment. Residue histidine 37 coordinates a bacteriochlorophyll. The Periplasmic portion of the chain corresponds to arginine 44 to glutamine 48.

This sequence belongs to the antenna complex beta subunit family. As to quaternary structure, the core complex is formed by different alpha and beta chains, binding bacteriochlorophyll molecules, and arranged most probably in tetrameric structures disposed around the reaction center. The non-pigmented gamma chains may constitute additional components.

The protein localises to the cell inner membrane. Functionally, antenna complexes are light-harvesting systems, which transfer the excitation energy to the reaction centers. This Rhodocyclus tenuis (Rhodospirillum tenue) protein is Light-harvesting polypeptide B-885 beta-2 chain.